A 347-amino-acid chain; its full sequence is Probable RNA methyltransferase Lcho_2507 (347 aa).

The active-site Proton acceptor is the Glu-89. The Radical SAM core domain occupies 92 to 318 (LLPRDGLCVS…TKLRQSAGQD (227 aa)). The cysteines at positions 99 and 323 are disulfide-linked. The [4Fe-4S] cluster site is built by Cys-106, Cys-110, and Cys-113. S-adenosyl-L-methionine-binding positions include 151–152 (GE), Ser-181, 204–206 (SLH), and Asn-280. Catalysis depends on Cys-323, which acts as the S-methylcysteine intermediate.

It belongs to the radical SAM superfamily. RlmN family. [4Fe-4S] cluster serves as cofactor.

Its subcellular location is the cytoplasm. The chain is Probable RNA methyltransferase Lcho_2507 from Leptothrix cholodnii (strain ATCC 51168 / LMG 8142 / SP-6) (Leptothrix discophora (strain SP-6)).